We begin with the raw amino-acid sequence, 327 residues long: Glycerol-3-phosphate dehydrogenase [NAD(P)+] (327 aa).

Positions 13, 34, and 107 each coordinate NADPH. The sn-glycerol 3-phosphate site is built by lysine 107 and glycine 135. Alanine 139 is an NADPH binding site. The sn-glycerol 3-phosphate site is built by lysine 190, aspartate 243, serine 253, arginine 254, and asparagine 255. Lysine 190 (proton acceptor) is an active-site residue. An NADPH-binding site is contributed by arginine 254. NADPH contacts are provided by valine 276 and glutamate 277.

The protein belongs to the NAD-dependent glycerol-3-phosphate dehydrogenase family.

It localises to the cytoplasm. The catalysed reaction is sn-glycerol 3-phosphate + NAD(+) = dihydroxyacetone phosphate + NADH + H(+). The enzyme catalyses sn-glycerol 3-phosphate + NADP(+) = dihydroxyacetone phosphate + NADPH + H(+). The protein operates within membrane lipid metabolism; glycerophospholipid metabolism. Functionally, catalyzes the reduction of the glycolytic intermediate dihydroxyacetone phosphate (DHAP) to sn-glycerol 3-phosphate (G3P), the key precursor for phospholipid synthesis. This is Glycerol-3-phosphate dehydrogenase [NAD(P)+] from Rhizobium etli (strain ATCC 51251 / DSM 11541 / JCM 21823 / NBRC 15573 / CFN 42).